A 550-amino-acid polypeptide reads, in one-letter code: Mycosin-2 (550 aa).

Residues 1–33 (MASPLNRPGLRAAAASAALTLVALSANVPAAQA) form the signal peptide. The disordered stretch occupies residues 34-62 (IPPPSVDPAMVPADARPGPDQPMRRSNSC). The Peptidase S8 domain occupies 79-490 (GFNLVNISKA…YGLVDPVAAL (412 aa)). Catalysis depends on charge relay system residues Asp103 and His133. Positions 168–190 (PPVTAAPAPPVEVPPPMPPPPPV) are enriched in pro residues. Positions 168–236 (PPVTAAPAPP…PPPPPGAPDG (69 aa)) are disordered. Ser435 functions as the Charge relay system in the catalytic mechanism. A helical membrane pass occupies residues 524-544 (NIAIGFVGAVATGVLAMAIGA).

This sequence belongs to the peptidase S8 family.

It is found in the cell membrane. This is Mycosin-2 from Mycobacterium tuberculosis (strain ATCC 25618 / H37Rv).